We begin with the raw amino-acid sequence, 273 residues long: NH(3)-dependent NAD(+) synthetase (273 aa).

47–54 (GISGGQDS) lines the ATP pocket. Asp-53 provides a ligand contact to Mg(2+). Arg-139 provides a ligand contact to deamido-NAD(+). Thr-159 lines the ATP pocket. Glu-164 is a Mg(2+) binding site. Deamido-NAD(+)-binding residues include Lys-172 and Asp-179. Residues Lys-188 and Thr-210 each coordinate ATP. Residue 259 to 260 (HK) participates in deamido-NAD(+) binding.

This sequence belongs to the NAD synthetase family. Homodimer.

It catalyses the reaction deamido-NAD(+) + NH4(+) + ATP = AMP + diphosphate + NAD(+) + H(+). Its pathway is cofactor biosynthesis; NAD(+) biosynthesis; NAD(+) from deamido-NAD(+) (ammonia route): step 1/1. Catalyzes the ATP-dependent amidation of deamido-NAD to form NAD. Uses ammonia as a nitrogen source. In Staphylococcus aureus (strain N315), this protein is NH(3)-dependent NAD(+) synthetase.